The chain runs to 123 residues: Small ribosomal subunit protein uS13 (123 aa).

The tract at residues 93-123 (RRNLPVRGQKTKTNARTRKGPKRAIGGKKKK) is disordered.

Belongs to the universal ribosomal protein uS13 family. In terms of assembly, part of the 30S ribosomal subunit. Forms a loose heterodimer with protein S19. Forms two bridges to the 50S subunit in the 70S ribosome.

Functionally, located at the top of the head of the 30S subunit, it contacts several helices of the 16S rRNA. In the 70S ribosome it contacts the 23S rRNA (bridge B1a) and protein L5 of the 50S subunit (bridge B1b), connecting the 2 subunits; these bridges are implicated in subunit movement. Contacts the tRNAs in the A and P-sites. The polypeptide is Small ribosomal subunit protein uS13 (Clostridium botulinum (strain Loch Maree / Type A3)).